The sequence spans 148 residues: Meiosis inducing protein mei3 (148 aa).

Polar residues predominate over residues 1–20 (MSSQNTSNSRHPASSASALP). The disordered stretch occupies residues 1–96 (MSSQNTSNSR…AQRIEHENKE (96 aa)). The segment covering 21–46 (NRTNTARRSTSPRTSTGSSSTNTNTK) has biased composition (low complexity). Residues 75-86 (PMKRTKRVRRTP) show a composition bias toward basic residues.

Functionally, acts as a critical meiotic inducer by binding non-covalently to protein kinase ran1/pat1 inhibiting its enzymatic activity. Inhibits ran1/pat1 by acting as a pseudosubstrate for ran1/pat1 instead of its natural substrate ste11. Inactivation of the ran1/pat1 protein kinase is both necessary and sufficient to divert a vegetative cell from mitotic division to meiotic differentiation. The polypeptide is Meiosis inducing protein mei3 (Schizosaccharomyces pombe (strain 972 / ATCC 24843) (Fission yeast)).